A 169-amino-acid chain; its full sequence is Endoribonuclease YbeY (169 aa).

His130, His134, and His140 together coordinate Zn(2+).

This sequence belongs to the endoribonuclease YbeY family. The cofactor is Zn(2+).

The protein localises to the cytoplasm. Single strand-specific metallo-endoribonuclease involved in late-stage 70S ribosome quality control and in maturation of the 3' terminus of the 16S rRNA. The polypeptide is Endoribonuclease YbeY (Neisseria meningitidis serogroup B (strain ATCC BAA-335 / MC58)).